Reading from the N-terminus, the 348-residue chain is L-threonine 3-dehydrogenase (348 aa).

Residue C38 coordinates Zn(2+). Residues T40 and H43 each act as charge relay system in the active site. Residues H63, E64, C93, C96, C99, and C107 each contribute to the Zn(2+) site. NAD(+)-binding positions include I175, D195, R200, 263–265 (LGI), and 287–288 (IY).

It belongs to the zinc-containing alcohol dehydrogenase family. As to quaternary structure, homotetramer. The cofactor is Zn(2+).

It is found in the cytoplasm. It carries out the reaction L-threonine + NAD(+) = (2S)-2-amino-3-oxobutanoate + NADH + H(+). It participates in amino-acid degradation; L-threonine degradation via oxydo-reductase pathway; glycine from L-threonine: step 1/2. In terms of biological role, catalyzes the NAD(+)-dependent oxidation of L-threonine to 2-amino-3-ketobutyrate. This chain is L-threonine 3-dehydrogenase, found in Deinococcus radiodurans (strain ATCC 13939 / DSM 20539 / JCM 16871 / CCUG 27074 / LMG 4051 / NBRC 15346 / NCIMB 9279 / VKM B-1422 / R1).